The primary structure comprises 245 residues: Large ribosomal subunit protein eL29 (245 aa).

The span at 1 to 26 (MAKSKNHTTHNQSRKWHRNGIKKPRS) shows a compositional bias: basic residues. Disordered regions lie at residues 1-33 (MAKS…ESLK) and 114-245 (RGLR…AKAP). K5 is modified (N6-methyllysine). S31 is subject to Phosphoserine. K33 carries the post-translational modification N6-acetyllysine. Low complexity predominate over residues 134–150 (KGKVKAQIKAQAQAQIK). Residues 157 to 171 (AQAETKPKAQAETKP) show a composition bias toward basic and acidic residues. Composition is skewed to low complexity over residues 172–226 (KAQA…ATPA) and 234–245 (PPKGAQPPAKAP).

Belongs to the eukaryotic ribosomal protein eL29 family. As to quaternary structure, component of the large ribosomal subunit.

It is found in the cytoplasm. Component of the large ribosomal subunit. The ribosome is a large ribonucleoprotein complex responsible for the synthesis of proteins in the cell. This is Large ribosomal subunit protein eL29 (RPL29) from Oryctolagus cuniculus (Rabbit).